Consider the following 37-residue polypeptide: Potassium channel toxin alpha-KTx 1.3 (37 aa).

Q1 carries the post-translational modification Pyrrolidone carboxylic acid. Intrachain disulfides connect C7/C28, C13/C33, and C17/C35. An interaction with Ca(2+)-activated K(+) channels region spans residues 26–33; sequence GKCMGKKC.

This sequence belongs to the short scorpion toxin superfamily. Potassium channel inhibitor family. Alpha-KTx 01 subfamily. As to expression, expressed by the venom gland.

The protein localises to the secreted. Blocks selectively the high conductance calcium-activated (maxi-K) potassium channels (KCa1.1/KCNMA1). This Hottentotta tamulus (Eastern Indian scorpion) protein is Potassium channel toxin alpha-KTx 1.3.